The primary structure comprises 949 residues: MCNHHPQHSHDNDTIRIRGARTHNLKNIDLDIPRHKLVVVTGLSGSGKSSLAFDTLYAEGQRRYVESLSAYARQFLQMMDKPDVDLIEGLSPAISIEQKSTSHNPRSTVGTVTEIHDYLRLLYARVGTPYCPEHKLPLSSQTVSQMVDAVLKLPEDTRVMILAPTVRERKGEFVDFFADLQAQGFARVRVDGEVYQLDEVPKLEKNIKHNIDVVIDRVKVKADIKQRLAESFETALRHGNERALAMEMDSGEEHWFSARFACPVCSYSLPELEPRLFSFNNPMGSCPTCDGLGNTNFFDPEKVVAHPELSLATGAIDGWDKRNQFYFQMIQSLARHYGFDVQAAWETLPEKVKKVVLHGSGKEVIDFTYLSERGTTFNRSHAFEGIIPNLERRYRETDSETVREKLREYQNHRACPSCGGARLRKEARYVYVSGEPLHEVSAWPLTKTHQFFETLDLDGNKKQIAEKILKEITERLGFLINVGLDYLNLSRSAETLSGGEAQRIRLASQIGSGLTGVMYVLDEPSIGLHQRDNDRLLATLKRLRDLGNSVIVVEHDEDAIREADFVVDMGPGAGEHGGNVLIADTPENVAQCENSVTGQYLSGKKSIAVPSERTPVNPDRMLVLKGARGNNLKNVTLELPLGLITCITGVSGSGKSTLINDTLAKITARELNRAQEEPAPFDDIHGLEHLDKVINVDQSPIGRTPRSNPATYTGLFTPIRELFAGVPLSRERGYNVGRFSFNVKGGRCEACQGDGVIKVEMHFLPDVYVPCEVCHGKRYNRETLEIQYKGKNISQVLDMTVEEAREFFDAVPTVSRKLQTLMDVGLGYIRLGQSATTLSGGEAQRVKLALELSKRDTGRTLYILDEPTTGLHFADIALLLEVIGRLKGKGNSIVIIEHNLDVIKTADWIVDLGPEGGDGGGRIIAKGSPEQVAKVKGSYTGKYLKVVLR.

42 to 49 (GLSGSGKS) lines the ATP pocket. The C4-type zinc finger occupies 262-289 (CPVCSYSLPELEPRLFSFNNPMGSCPTC). ABC transporter domains are found at residues 319–596 (WDKR…ENSV) and 616–945 (VNPD…KYLK). 649–656 (GVSGSGKS) contacts ATP. Residues 748 to 774 (CEACQGDGVIKVEMHFLPDVYVPCEVC) form a C4-type zinc finger.

Belongs to the ABC transporter superfamily. UvrA family. As to quaternary structure, forms a heterotetramer with UvrB during the search for lesions.

Its subcellular location is the cytoplasm. In terms of biological role, the UvrABC repair system catalyzes the recognition and processing of DNA lesions. UvrA is an ATPase and a DNA-binding protein. A damage recognition complex composed of 2 UvrA and 2 UvrB subunits scans DNA for abnormalities. When the presence of a lesion has been verified by UvrB, the UvrA molecules dissociate. In Neisseria meningitidis serogroup B (strain ATCC BAA-335 / MC58), this protein is UvrABC system protein A.